Reading from the N-terminus, the 251-residue chain is Adapter protein MecA (251 aa).

The protein belongs to the MecA family. As to quaternary structure, homodimer.

In terms of biological role, enables the recognition and targeting of unfolded and aggregated proteins to the ClpC protease or to other proteins involved in proteolysis. The sequence is that of Adapter protein MecA from Streptococcus agalactiae serotype III (strain NEM316).